The sequence spans 476 residues: Adenosylhomocysteinase (476 aa).

Substrate contacts are provided by Thr-65, Asp-140, and Glu-201. 202 to 204 lines the NAD(+) pocket; that stretch reads TTT. Substrate contacts are provided by Lys-231 and Asp-235. Residues Asn-236, 265 to 270, Glu-288, Asn-323, 344 to 346, and Asn-392 contribute to the NAD(+) site; these read GYGDVG and IGH.

This sequence belongs to the adenosylhomocysteinase family. It depends on NAD(+) as a cofactor.

Its subcellular location is the cytoplasm. It catalyses the reaction S-adenosyl-L-homocysteine + H2O = L-homocysteine + adenosine. Its pathway is amino-acid biosynthesis; L-homocysteine biosynthesis; L-homocysteine from S-adenosyl-L-homocysteine: step 1/1. In terms of biological role, may play a key role in the regulation of the intracellular concentration of adenosylhomocysteine. This chain is Adenosylhomocysteinase, found in Bacteroides thetaiotaomicron (strain ATCC 29148 / DSM 2079 / JCM 5827 / CCUG 10774 / NCTC 10582 / VPI-5482 / E50).